We begin with the raw amino-acid sequence, 556 residues long: ATP synthase subunit alpha 2 (556 aa).

Residue 177–184 (GDRATGKT) coordinates ATP. The tract at residues 514–556 (GGHAEDAADDMGGALDGEHASGDATSIAPTPPGGAEAGAPRKR) is disordered. Over residues 546 to 556 (GGAEAGAPRKR) the composition is skewed to low complexity.

Belongs to the ATPase alpha/beta chains family. F-type ATPases have 2 components, CF(1) - the catalytic core - and CF(0) - the membrane proton channel. CF(1) has five subunits: alpha(3), beta(3), gamma(1), delta(1), epsilon(1). CF(0) has three main subunits: a(1), b(2) and c(9-12). The alpha and beta chains form an alternating ring which encloses part of the gamma chain. CF(1) is attached to CF(0) by a central stalk formed by the gamma and epsilon chains, while a peripheral stalk is formed by the delta and b chains.

The protein resides in the cell inner membrane. The enzyme catalyses ATP + H2O + 4 H(+)(in) = ADP + phosphate + 5 H(+)(out). Functionally, produces ATP from ADP in the presence of a proton gradient across the membrane. The alpha chain is a regulatory subunit. In Burkholderia thailandensis (strain ATCC 700388 / DSM 13276 / CCUG 48851 / CIP 106301 / E264), this protein is ATP synthase subunit alpha 2.